We begin with the raw amino-acid sequence, 237 residues long: Type II secretion system protein J (237 aa).

A propeptide spans 1–6 (MRLQRG) (leader sequence). The residue at position 7 (Phe-7) is an N-methylphenylalanine. Residues 7–29 (FTLLELLIAIAIFALLALATYRM) traverse the membrane as a helical segment. A disordered region spans residues 203-237 (PLKQDQPQGQPGGENGENGEGGVPQPPEGMPGAPE). The span at 212 to 224 (QPGGENGENGEGG) shows a compositional bias: gly residues. Residues 226-237 (PQPPEGMPGAPE) show a composition bias toward pro residues.

This sequence belongs to the GSP J family. Type II secretion is composed of four main components: the outer membrane complex, the inner membrane complex, the cytoplasmic secretion ATPase and the periplasm-spanning pseudopilus. Forms the tip of the type II pseudopilus by interacting with XcpV, XcpU and XcpX. Interacts with core component XcpT. In terms of processing, cleaved by prepilin peptidase. Post-translationally, methylated by prepilin peptidase at the amino group of the N-terminal phenylalanine once the leader sequence is cleaved by prepilin peptidase.

The protein localises to the cell inner membrane. In terms of biological role, component of the type II secretion system required for the energy-dependent secretion of extracellular factors such as proteases and toxins from the periplasm. Part of the pseudopilus tip complex that is critical for the recognition and binding of secretion substrates. Type II pseudopilus confers increased bacterial adhesive capabilities. This is Type II secretion system protein J (xcpW) from Pseudomonas aeruginosa (strain ATCC 15692 / DSM 22644 / CIP 104116 / JCM 14847 / LMG 12228 / 1C / PRS 101 / PAO1).